The chain runs to 389 residues: MLKRHQQLLFRLIRQSVLHQSSPTSSSASSTLLNSENGEKFVKTVVDRLAQCQAGNATAAPEQISYWESISKQSAKVSDGRSELSQLRTIINDPKETEEMRKLAEVDVESIEENLETELQELAVKIVPLNNLDVLSKCQIELSCGAGGQEAMLFTGELLDMYQKLAAVNSWKWDPLQVDNVPLGGVRSALIAVSGEKVYAKMRFEAGVHRVQRVPVNDSRMHTSTASISVLPEPEEVSVVVPSDSVKIEAMRASGPGGQNVNKRSTAVRMTHKETGIAVHCMDERFQHLNIQIAYKRLAAILMQKQVDAMLEKIVSKRKLQVGSKARAEKIRTYNFQHDRVTDHRIQMSITGVAEFLSAGETLQTMIERLQEQHLEDRLDHIIENCIVE.

The residue at position 259 (Gln-259) is an N5-methylglutamine.

Belongs to the prokaryotic/mitochondrial release factor family. Methylation of glutamine in the GGQ triplet is conserved from bacteria to mammals.

Its subcellular location is the mitochondrion. Its function is as follows. Mitochondrial peptide chain release factor that directs the termination of translation in response to the peptide chain termination codons UAA and UAG. The chain is Probable peptide chain release factor 1, mitochondrial from Caenorhabditis elegans.